Here is a 265-residue protein sequence, read N- to C-terminus: MPSKKVIKKKVAAVPAHIRAQTQVQKEVKNPLFEKRARNFNIGQDIQPKKDVTRFVKWPKYIRLQRQSAILQKRLKVPPTINQFRTALDSQSARQAFKLLDKYRPESTEAKKNRLRARAEARAAGKKEEVTKRPNTVRHGVNTITRLVETRRAQLVLIAHDVNPLEIVLHLPALCRKYNVPYAIIKGKASLGTVVRRKTTAAVALVDVNPEDKSALNKLVETVNNNFSERHEEIRKHWGGGVMSAKSDAKKLKIERARARDLGKL.

The protein belongs to the eukaryotic ribosomal protein eL8 family. Interacts with cmd-1 in the presence of Ca(2+).

The chain is Large ribosomal subunit protein eL8 from Caenorhabditis elegans.